Reading from the N-terminus, the 420-residue chain is Gamma-glutamyl phosphate reductase (420 aa).

It belongs to the gamma-glutamyl phosphate reductase family.

Its subcellular location is the cytoplasm. The catalysed reaction is L-glutamate 5-semialdehyde + phosphate + NADP(+) = L-glutamyl 5-phosphate + NADPH + H(+). It participates in amino-acid biosynthesis; L-proline biosynthesis; L-glutamate 5-semialdehyde from L-glutamate: step 2/2. Catalyzes the NADPH-dependent reduction of L-glutamate 5-phosphate into L-glutamate 5-semialdehyde and phosphate. The product spontaneously undergoes cyclization to form 1-pyrroline-5-carboxylate. In Neisseria meningitidis serogroup C (strain 053442), this protein is Gamma-glutamyl phosphate reductase.